Consider the following 185-residue polypeptide: GTP-binding protein rhb1 (185 aa).

GTP-binding residues include S16, G18, K19, S20, S21, V32, Y35, T38, N119, D122, and A150. Position 20 (S20) interacts with Mg(2+). The Effector region signature appears at 35–43 (YYPTIENTF). T38 provides a ligand contact to Mg(2+). C182 is modified (cysteine methyl ester). A lipid anchor (S-farnesyl cysteine) is attached at C182. Positions 183 to 185 (VIA) are cleaved as a propeptide — removed in mature form.

It belongs to the small GTPase superfamily. Rheb family.

It is found in the cell membrane. The enzyme catalyses GTP + H2O = GDP + phosphate + H(+). Functionally, binds GTP and exhibits intrinsic GTPase activity. Regulates entry into stationary phase when extracellular nitrogen levels are adequate for growth. The polypeptide is GTP-binding protein rhb1 (rhb1) (Schizosaccharomyces pombe (strain 972 / ATCC 24843) (Fission yeast)).